The sequence spans 203 residues: Small ribosomal subunit protein uS4 (203 aa).

Residues arginine 93–aspartate 154 enclose the S4 RNA-binding domain.

Belongs to the universal ribosomal protein uS4 family. Part of the 30S ribosomal subunit. Contacts protein S5. The interaction surface between S4 and S5 is involved in control of translational fidelity.

Functionally, one of the primary rRNA binding proteins, it binds directly to 16S rRNA where it nucleates assembly of the body of the 30S subunit. Its function is as follows. With S5 and S12 plays an important role in translational accuracy. The chain is Small ribosomal subunit protein uS4 from Chlorobium luteolum (strain DSM 273 / BCRC 81028 / 2530) (Pelodictyon luteolum).